The following is a 69-amino-acid chain: Sec-independent protein translocase protein TatA (69 aa).

The helical transmembrane segment at 1–21 (MFGKLGMPELVLIFAVALVIF) threads the bilayer.

Belongs to the TatA/E family. As to quaternary structure, forms a complex with TatC.

It localises to the cell membrane. Its function is as follows. Part of the twin-arginine translocation (Tat) system that transports large folded proteins containing a characteristic twin-arginine motif in their signal peptide across membranes. TatA could form the protein-conducting channel of the Tat system. This Alkaliphilus metalliredigens (strain QYMF) protein is Sec-independent protein translocase protein TatA.